Consider the following 706-residue polypeptide: DNA ligase (706 aa).

Residues 48–52 (DAAYD), 97–98 (SL), and Glu131 contribute to the NAD(+) site. Lys133 serves as the catalytic N6-AMP-lysine intermediate. Arg154, Glu191, Lys307, and Lys331 together coordinate NAD(+). Zn(2+) is bound by residues Cys425, Cys428, Cys443, and Cys449. The BRCT domain maps to 628-706 (RADSAVAGKT…EDEWLKLIEG (79 aa)).

This sequence belongs to the NAD-dependent DNA ligase family. LigA subfamily. Mg(2+) is required as a cofactor. Requires Mn(2+) as cofactor.

It carries out the reaction NAD(+) + (deoxyribonucleotide)n-3'-hydroxyl + 5'-phospho-(deoxyribonucleotide)m = (deoxyribonucleotide)n+m + AMP + beta-nicotinamide D-nucleotide.. Its function is as follows. DNA ligase that catalyzes the formation of phosphodiester linkages between 5'-phosphoryl and 3'-hydroxyl groups in double-stranded DNA using NAD as a coenzyme and as the energy source for the reaction. It is essential for DNA replication and repair of damaged DNA. This chain is DNA ligase, found in Afipia carboxidovorans (strain ATCC 49405 / DSM 1227 / KCTC 32145 / OM5) (Oligotropha carboxidovorans).